The sequence spans 1202 residues: MQKDKKNYKLRKFGPITERRDYSITKHSLPVGDILATSKKSYQDFINKKIEELLNEIYPIEASNKEASLEYEKKSVKFELPFKKAEHENLQIKTCKAKKTNFSMKVYITLKKVVSQTGVVKKEKILLGEIPYITSSGSFIINGSEKVIVSQLIRSPGAYFGVSVRNKQSEDLFNKLEILPRIGSWIEVSHKVTSANLDAIKIKIDKNKNINIVTFLASFGLLADDIRYLFGKNEVLEETIRKNKTIDITEFSRQEIMDLCQEKIFRIIRKGDRISEESKRSLLSGMLFDKKRYNLSKTGRYMLNNKLSLVERITNTYLAQKVVSHLGNTFDVGTYVTYEIAKEIQESFEAKAKDNKSNLHLEKIPNINPDDVYYKINKDNKSLNKRINIARIKIWPTKRAMDANETPSEVIGNDPKATEEHLLLSDIIAAISYYLNLTVGIGQDDDPDSLMNKRIVSVGELLEGELRIALLKLEKATRERMGAKEPDKITAKNVTNNKLITNQMKTFFNTSKLAQFMDQINPLAEISNKRRVTSLGPGGLNRDTAQFEVRDVHSTHYGRICPIETPEGPNIGLILNYAIYSTVNELGFLQTPYYKVNDGVVDYNDVRYLTSYEEIGYAFAQSSVHVNDKNEIIDEQITIKKDYNYIIGSPKDIDFLEVSSKQIVSVAAAAIPFLENNDANRALMGSNMQRQAVPLIEAEAPLVATGIEADIAKFSSYNIVANNDGEVIYVDGTKIQVRTAKKIDTYNLKNFEKSNQGTIIQQKPIVKVGDHVKEGDLLVDGSSFKDGEMALGKNLLVGFTTWNGYNFEDAIIINERLVKDDVLTSIYIEEQTIQFRISKSSEDIMTRDIPNVSKYSMRNLDEFGIIKVGSEVVAGDVLVGRISPKGEENPSQEEKLLNAIFNQRPQNYKDTSLKVKNGHNGTVIHVEVLSRENGDILEDGLDSIIKVYIAQKRKIKVGDKMAGRHGNKGVISIILPEEDMPHLEDGTPLDIMLNPQGVPSRMNIGQVLEMHLGMAAKKLGTKFVTPSFDGIKKETIEDLLQEANLDKSGKQVVIDPITGEKFDNPISVGVIYMLKLNHMVDDKMHARSVGPYSLITQQPLGGKSQNGGQRFGEMETWALESYGASNILQEILTYKSDDIYSRNLVYKALVNDSAIPNPGMPESFNVLSNELKGLLMKLGITETESNSDELIQHFDHLGVEHE.

The protein belongs to the RNA polymerase beta chain family. In terms of assembly, the RNAP catalytic core consists of 2 alpha, 1 beta, 1 beta' and 1 omega subunit. When a sigma factor is associated with the core the holoenzyme is formed, which can initiate transcription.

The enzyme catalyses RNA(n) + a ribonucleoside 5'-triphosphate = RNA(n+1) + diphosphate. Functionally, DNA-dependent RNA polymerase catalyzes the transcription of DNA into RNA using the four ribonucleoside triphosphates as substrates. This chain is DNA-directed RNA polymerase subunit beta, found in Mycoplasmopsis synoviae (strain 53) (Mycoplasma synoviae).